Consider the following 61-residue polypeptide: Metallothionein-2 (61 aa).

Met1 carries the N-acetylmethionine modification. The tract at residues 1 to 29 (MDPNCSCATDGSCSCAGSCKCKQCKCTSC) is beta. Positions 5, 7, 13, 15, 19, 21, 24, 26, 29, 33, 34, 36, 37, 41, 44, 48, 50, and 57 each coordinate a divalent metal cation. Positions 30–61 (KKSCCSCCPVGCAKCSQGCICKEASDKCSCCA) are alpha. Position 58 is a phosphoserine (Ser58). The a divalent metal cation site is built by Cys59 and Cys60.

This sequence belongs to the metallothionein superfamily. Type 1 family.

Metallothioneins have a high content of cysteine residues that bind various heavy metals; these proteins are transcriptionally regulated by both heavy metals and glucocorticoids. This Rattus norvegicus (Rat) protein is Metallothionein-2 (Mt2).